A 205-amino-acid polypeptide reads, in one-letter code: Small ribosomal subunit protein uS4 (205 aa).

The interval 21–47 (GRPKSPFNKRDYGPGQHGQGRKGKPSD) is disordered. The S4 RNA-binding domain maps to 94 to 154 (RRLDSVVYRA…DKSKQLAIID (61 aa)).

The protein belongs to the universal ribosomal protein uS4 family. In terms of assembly, part of the 30S ribosomal subunit. Contacts protein S5. The interaction surface between S4 and S5 is involved in control of translational fidelity.

Its function is as follows. One of the primary rRNA binding proteins, it binds directly to 16S rRNA where it nucleates assembly of the body of the 30S subunit. Functionally, with S5 and S12 plays an important role in translational accuracy. This Pelagibacter ubique (strain HTCC1062) protein is Small ribosomal subunit protein uS4.